Here is a 125-residue protein sequence, read N- to C-terminus: Large ribosomal subunit protein bL12 (125 aa).

It belongs to the bacterial ribosomal protein bL12 family. As to quaternary structure, homodimer. Part of the ribosomal stalk of the 50S ribosomal subunit. Forms a multimeric L10(L12)X complex, where L10 forms an elongated spine to which 2 to 4 L12 dimers bind in a sequential fashion. Binds GTP-bound translation factors.

Forms part of the ribosomal stalk which helps the ribosome interact with GTP-bound translation factors. Is thus essential for accurate translation. In Nitrobacter winogradskyi (strain ATCC 25391 / DSM 10237 / CIP 104748 / NCIMB 11846 / Nb-255), this protein is Large ribosomal subunit protein bL12.